Consider the following 243-residue polypeptide: MDWAAPALTSFVADSSYRHLCCYGAGIAGNVFAFVLFISPLPTFKRIVRNGSTEQFSAMPYIYSLLNCLICMWYGLPFVSYGVVLVATVNSIGAVFQLAYTAVFIAFADAKQRLKVSALLAAVFVVFGLIVFVSLALLDHPTRQMFVGYLSVASLIFMFASPLSIINLVIRTKSVEYMPFYLSLSMFLMSASFFGYGVLLNDFFIYIPNGIGTILGIIQLVLYAYFRKGSSEEAKLPLLVTHT.

The Extracellular segment spans residues 1 to 23; that stretch reads MDWAAPALTSFVADSSYRHLCCY. A helical transmembrane segment spans residues 24 to 44; that stretch reads GAGIAGNVFAFVLFISPLPTF. The MtN3/slv 1 domain occupies 24-111; sequence GAGIAGNVFA…AVFIAFADAK (88 aa). Residues 45–57 are Cytoplasmic-facing; it reads KRIVRNGSTEQFS. Residues 58 to 80 traverse the membrane as a helical segment; sequence AMPYIYSLLNCLICMWYGLPFVS. The Extracellular portion of the chain corresponds to 81-89; it reads YGVVLVATV. Residues 90–110 form a helical membrane-spanning segment; that stretch reads NSIGAVFQLAYTAVFIAFADA. Topologically, residues 111–117 are cytoplasmic; the sequence is KQRLKVS. The chain crosses the membrane as a helical span at residues 118-138; the sequence is ALLAAVFVVFGLIVFVSLALL. Residues 139–145 lie on the Extracellular side of the membrane; the sequence is DHPTRQM. The helical transmembrane segment at 146–166 threads the bilayer; the sequence is FVGYLSVASLIFMFASPLSII. The 84-residue stretch at 147–230 folds into the MtN3/slv 2 domain; sequence VGYLSVASLI…VLYAYFRKGS (84 aa). Topologically, residues 167–179 are cytoplasmic; it reads NLVIRTKSVEYMP. A helical membrane pass occupies residues 180 to 200; the sequence is FYLSLSMFLMSASFFGYGVLL. Residues 201-202 are Extracellular-facing; that stretch reads ND. The chain crosses the membrane as a helical span at residues 203 to 223; it reads FFIYIPNGIGTILGIIQLVLY. Residues 224–243 are Cytoplasmic-facing; that stretch reads AYFRKGSSEEAKLPLLVTHT.

It belongs to the SWEET sugar transporter family. In terms of assembly, forms homooligomers and/or heterooligomers.

It is found in the cell membrane. Its function is as follows. Mediates both low-affinity uptake and efflux of sugar across the plasma membrane. The polypeptide is Bidirectional sugar transporter SWEET2a (Sorghum bicolor (Sorghum)).